The primary structure comprises 445 residues: Phosphoglucosamine mutase (445 aa).

Catalysis depends on S102, which acts as the Phosphoserine intermediate. Residues S102, D241, D243, and D245 each contribute to the Mg(2+) site. Phosphoserine is present on S102.

Belongs to the phosphohexose mutase family. Mg(2+) serves as cofactor. Activated by phosphorylation.

The catalysed reaction is alpha-D-glucosamine 1-phosphate = D-glucosamine 6-phosphate. Functionally, catalyzes the conversion of glucosamine-6-phosphate to glucosamine-1-phosphate. The protein is Phosphoglucosamine mutase of Haemophilus influenzae (strain ATCC 51907 / DSM 11121 / KW20 / Rd).